A 281-amino-acid chain; its full sequence is Very long chain fatty acid elongase 7 (281 aa).

A2 carries the post-translational modification N-acetylalanine. Residues 2–27 (AFSDLTSRTVRFYDNWIKDADPRVEN) are Lumenal-facing. Residues 28-48 (WLLMSSPLPQTIILGLYVYFV) traverse the membrane as a helical segment. Over 49 to 72 (TSLGPKLMENRKPFELKKAMITYN) the chain is Cytoplasmic. Residues 73 to 93 (FFIVLFSVYMCYEFVMSGWGT) form a helical membrane-spanning segment. The Lumenal portion of the chain corresponds to 94–115 (GYSFRCDIVDYSQSPRAMRMVH). C99 and C231 are disulfide-bonded. The chain crosses the membrane as a helical span at residues 116–136 (TCWLYYFSKFIELFDTIFFVL). 3-oxoeicosanoyl-CoA contacts are provided by K124, R137, K139, Q142, and H147. Topologically, residues 137–142 (RKKNSQ) are cytoplasmic. The chain crosses the membrane as a helical span at residues 143 to 162 (VTFLHVFHHTIMPWTWWFGV). A HxxHH motif motif is present at residues 147–151 (HVFHH). The active-site Nucleophile is the H150. The Lumenal segment spans residues 163–176 (KFAAGGLGTFHALL). A helical membrane pass occupies residues 177 to 197 (NTAVHVVMYFYYGLCAMGPAY). 4 residues coordinate 3-oxoeicosanoyl-CoA: Y187, K204, T208, and Q211. At 198–206 (QKYLWWKKH) the chain is on the cytoplasmic side. The chain crosses the membrane as a helical span at residues 207–227 (LTSLQLVQFVLVTVHIGQIFF). Over 228–236 (MEDCNYQYP) the chain is Lumenal. A helical transmembrane segment spans residues 237 to 257 (VFLYIIMSYGCIFLLLFLHFW). Residues 258–281 (YRAYTKGQRLPKTMENGNCKSKHH) are Cytoplasmic-facing. A 3-oxoeicosanoyl-CoA-binding site is contributed by R266. Positions 277–281 (KSKHH) match the Di-lysine motif motif.

Belongs to the ELO family. ELOVL7 subfamily. In terms of assembly, homodimer. Interacts with TECR.

It localises to the endoplasmic reticulum membrane. It carries out the reaction a very-long-chain acyl-CoA + malonyl-CoA + H(+) = a very-long-chain 3-oxoacyl-CoA + CO2 + CoA. It catalyses the reaction eicosanoyl-CoA + malonyl-CoA + H(+) = 3-oxodocosanoyl-CoA + CO2 + CoA. The enzyme catalyses (5Z,8Z,11Z,14Z)-eicosatetraenoyl-CoA + malonyl-CoA + H(+) = (7Z,10Z,13Z,16Z)-3-oxodocosatetraenoyl-CoA + CO2 + CoA. The catalysed reaction is (6Z,9Z,12Z)-octadecatrienoyl-CoA + malonyl-CoA + H(+) = (8Z,11Z,14Z)-3-oxoeicosatrienoyl-CoA + CO2 + CoA. It carries out the reaction (9Z,12Z)-octadecadienoyl-CoA + malonyl-CoA + H(+) = (11Z,14Z)-3-oxoicosa-11,14-dienoyl-CoA + CO2 + CoA. It catalyses the reaction (9Z)-octadecenoyl-CoA + malonyl-CoA + H(+) = 3-oxo-(11Z)-eicosenoyl-CoA + CO2 + CoA. The enzyme catalyses octadecanoyl-CoA + malonyl-CoA + H(+) = 3-oxoeicosanoyl-CoA + CO2 + CoA. The catalysed reaction is hexadecanoyl-CoA + malonyl-CoA + H(+) = 3-oxooctadecanoyl-CoA + CO2 + CoA. It carries out the reaction (9Z,12Z,15Z)-octadecatrienoyl-CoA + malonyl-CoA + H(+) = (11Z,14Z,17Z)-3-oxoeicosatrienoyl-CoA + CO2 + CoA. The protein operates within lipid metabolism; fatty acid biosynthesis. In terms of biological role, catalyzes the first and rate-limiting reaction of the four reactions that constitute the long-chain fatty acids elongation cycle. This endoplasmic reticulum-bound enzymatic process allows the addition of 2 carbons to the chain of long- and very long-chain fatty acids (VLCFAs) per cycle. Condensing enzyme with higher activity toward C18 acyl-CoAs, especially C18:3(n-3) acyl-CoAs and C18:3(n-6)-CoAs. Also active toward C20:4-, C18:0-, C18:1-, C18:2- and C16:0-CoAs, and weakly toward C20:0-CoA. Little or no activity toward C22:0-, C24:0-, or C26:0-CoAs. May participate in the production of saturated and polyunsaturated VLCFAs of different chain lengths that are involved in multiple biological processes as precursors of membrane lipids and lipid mediators. In Rattus norvegicus (Rat), this protein is Very long chain fatty acid elongase 7.